A 145-amino-acid chain; its full sequence is Large ribosomal subunit protein uL11 (145 aa).

It belongs to the universal ribosomal protein uL11 family. As to quaternary structure, part of the ribosomal stalk of the 50S ribosomal subunit. Interacts with L10 and the large rRNA to form the base of the stalk. L10 forms an elongated spine to which L12 dimers bind in a sequential fashion forming a multimeric L10(L12)X complex. One or more lysine residues are methylated.

Its function is as follows. Forms part of the ribosomal stalk which helps the ribosome interact with GTP-bound translation factors. The polypeptide is Large ribosomal subunit protein uL11 (Hydrogenobaculum sp. (strain Y04AAS1)).